The primary structure comprises 719 residues: DNA ligase (719 aa).

Residues 42–46, 92–93, and Glu126 contribute to the NAD(+) site; these read DAAYD and SL. The active-site N6-AMP-lysine intermediate is Lys128. NAD(+) is bound by residues Arg149, Glu185, Lys301, and Lys325. Cys430, Cys433, Cys448, and Cys454 together coordinate Zn(2+). One can recognise a BRCT domain in the interval 640–719; the sequence is ATGSPVEGKT…DDWFKLVGED (80 aa).

Belongs to the NAD-dependent DNA ligase family. LigA subfamily. It depends on Mg(2+) as a cofactor. Mn(2+) is required as a cofactor.

The enzyme catalyses NAD(+) + (deoxyribonucleotide)n-3'-hydroxyl + 5'-phospho-(deoxyribonucleotide)m = (deoxyribonucleotide)n+m + AMP + beta-nicotinamide D-nucleotide.. In terms of biological role, DNA ligase that catalyzes the formation of phosphodiester linkages between 5'-phosphoryl and 3'-hydroxyl groups in double-stranded DNA using NAD as a coenzyme and as the energy source for the reaction. It is essential for DNA replication and repair of damaged DNA. The polypeptide is DNA ligase (Brucella suis biovar 1 (strain 1330)).